The primary structure comprises 128 residues: MRHRKSGRQLNRNSSHRQAMFRNMAGSLVRHEIIKTTLPKAKELRRVVEPLITLAKTDSVANRRLAFARTRDNEIVAKLFNELGPRFASRAGGYTRILKCGFRAGDNAPMAYIELVDRSESKAEATAE.

This sequence belongs to the bacterial ribosomal protein bL17 family. In terms of assembly, part of the 50S ribosomal subunit. Contacts protein L32.

This chain is Large ribosomal subunit protein bL17, found in Enterobacter sp. (strain 638).